The following is a 181-amino-acid chain: ADP-ribosylation factor 3 (181 aa).

The N-myristoyl glycine moiety is linked to residue G2. GTP-binding positions include 24-31 (GLDAAGKT), 67-71 (DVGGQ), and 126-129 (NKQD).

Belongs to the small GTPase superfamily. Arf family. As to quaternary structure, interacts with PRKCABP. Interacts with PI4KB and NCS1/FREQ at the Golgi complex.

It is found in the golgi apparatus. The protein resides in the cytoplasm. The protein localises to the perinuclear region. GTP-binding protein that functions as an allosteric activator of the cholera toxin catalytic subunit, an ADP-ribosyltransferase. Involved in protein trafficking; may modulate vesicle budding and uncoating within the Golgi apparatus. The polypeptide is ADP-ribosylation factor 3 (ARF3) (Bos taurus (Bovine)).